The primary structure comprises 317 residues: Taste receptor type 2 member 14 (317 aa).

Over 1–7 (MGDVIKS) the chain is Extracellular. A helical membrane pass occupies residues 8–28 (IFTFVLIVEFIIGNLGNSFIA). Topologically, residues 29–55 (LVNCIDWVKGRKISSVDQILTALAISR) are cytoplasmic. A helical transmembrane segment spans residues 56–76 (ISLVWLIFGSWCVSVFLPALF). The Extracellular segment spans residues 77–87 (ATEKMFRMLTN). Positions 86 and 89 each coordinate cholesterol. The helical transmembrane segment at 88 to 108 (IWTVINHFSVWLATGLGTFYF) threads the bilayer. The Cytoplasmic portion of the chain corresponds to 109–129 (LKIANFSNSIFLYLKWRVKKV). Residues 130 to 150 (VLVLLLVTSVFLFLNIALINI) form a helical membrane-spanning segment. The Extracellular segment spans residues 151-184 (HINASINGYRRNKTCSSDSSNFTRFSSLIVLTST). N-linked (GlcNAc...) asparagine glycosylation is found at asparagine 153, asparagine 162, and asparagine 171. Valine 180 provides a ligand contact to cholesterol. Residues 185 to 205 (VFIFIPFTLSLAMFLLLIFSL) traverse the membrane as a helical segment. The Cytoplasmic portion of the chain corresponds to 206-232 (WKHRKKMQHXVKRSGDASTKAHRGVKS). The helical transmembrane segment at 233–253 (VITFFLLYAIFCLSFFISVWT) threads the bilayer. The Extracellular segment spans residues 254 to 261 (SERLEENL). A helical transmembrane segment spans residues 262–282 (IILSQVMGMAYPSCHSCVLIL). Serine 265 and methionine 268 together coordinate cholesterol. At 283–317 (GNKKLRQASLSVLLWLRYMFKDGEPSGHKEFRESS) the chain is on the cytoplasmic side.

Belongs to the G-protein coupled receptor T2R family. Core component of the TAS2R14-GNAI1 complex, consisting of TAS2R14, GNAI1, GNB1 and GNG2; within the complex interacts with GNAI1. Core component of the TAS2R14-GNAT3 complex, consisting of TAS2R14, GNAT3, GNB1 and GNG2; within the complex interacts with GNAT3. Core component of the TAS2R14-GNAS2 complex, consisting of TAS2R14, GNAS2, GNB1 and GNG2; within the complex interacts with GNAS2.

It is found in the membrane. The catalysed reaction is Ca(2+)(in) = Ca(2+)(out). It carries out the reaction 3',5'-cyclic AMP(in) = 3',5'-cyclic AMP(out). With respect to regulation, basal activity is enhanced by binding to bitter tastants, such as flufenamic acid and aristolochic acid. Regulated by cholesterol in a concentration-dependent manner. Gustducin-linked G-protein coupled receptor that plays a role in the perception of bitterness. The activity of this receptor stimulates GNAT3, activating the gustducin G-protein pathway. Likely plays a role in sensing the chemical composition of the gastrointestinal content and other extra-oral tissues via the inhibitory G-protein pathways. In Gorilla gorilla gorilla (Western lowland gorilla), this protein is Taste receptor type 2 member 14 (TAS2R14).